The chain runs to 83 residues: Exodeoxyribonuclease 7 small subunit (83 aa).

This sequence belongs to the XseB family. As to quaternary structure, heterooligomer composed of large and small subunits.

It localises to the cytoplasm. It catalyses the reaction Exonucleolytic cleavage in either 5'- to 3'- or 3'- to 5'-direction to yield nucleoside 5'-phosphates.. In terms of biological role, bidirectionally degrades single-stranded DNA into large acid-insoluble oligonucleotides, which are then degraded further into small acid-soluble oligonucleotides. This Rhizobium etli (strain ATCC 51251 / DSM 11541 / JCM 21823 / NBRC 15573 / CFN 42) protein is Exodeoxyribonuclease 7 small subunit.